We begin with the raw amino-acid sequence, 327 residues long: Probable pectinesterase A (327 aa).

Residues 1-19 form the signal peptide; sequence MHTPYLLGALAALAATAVG. An N-linked (GlcNAc...) asparagine glycan is attached at N84. Q145 contacts substrate. The active-site Proton donor is the D168. Residue D189 is the Nucleophile of the active site. Residues R249 and W251 each coordinate substrate. N-linked (GlcNAc...) asparagine glycosylation occurs at N288.

It belongs to the pectinesterase family.

It localises to the secreted. It carries out the reaction [(1-&gt;4)-alpha-D-galacturonosyl methyl ester](n) + n H2O = [(1-&gt;4)-alpha-D-galacturonosyl](n) + n methanol + n H(+). It functions in the pathway glycan metabolism; pectin degradation; 2-dehydro-3-deoxy-D-gluconate from pectin: step 1/5. Its function is as follows. Involved in maceration and soft-rotting of plant tissue. The polypeptide is Probable pectinesterase A (pmeA) (Aspergillus niger (strain ATCC MYA-4892 / CBS 513.88 / FGSC A1513)).